Reading from the N-terminus, the 270-residue chain is Putative phosphoenolpyruvate synthase regulatory protein (270 aa).

Gly-150–Thr-157 is an ADP binding site.

Belongs to the pyruvate, phosphate/water dikinase regulatory protein family. PSRP subfamily.

It catalyses the reaction [pyruvate, water dikinase] + ADP = [pyruvate, water dikinase]-phosphate + AMP + H(+). The catalysed reaction is [pyruvate, water dikinase]-phosphate + phosphate + H(+) = [pyruvate, water dikinase] + diphosphate. Its function is as follows. Bifunctional serine/threonine kinase and phosphorylase involved in the regulation of the phosphoenolpyruvate synthase (PEPS) by catalyzing its phosphorylation/dephosphorylation. The chain is Putative phosphoenolpyruvate synthase regulatory protein from Shewanella sp. (strain ANA-3).